The following is a 317-amino-acid chain: Apolipoprotein E (317 aa).

An N-terminal signal peptide occupies residues 1-18 (MKVLWAALLVTFLAGCQA). A run of 8 repeats spans residues 80-101 (TLMD…EQLS), 102-123 (PVAE…ARLG), 124-145 (ADME…AMLG), 146-167 (QSTE…KRLL), 168-189 (RDAD…EGAE), 190-211 (RGVS…VRAA), 212-233 (TVGS…ERLR), and 234-255 (ARME…EQVA). The 8 X 22 AA approximate tandem repeats stretch occupies residues 80–255 (TLMDETMKEL…RLDEVKEQVA (176 aa)). A Methionine sulfoxide modification is found at Met143. Residue Ser147 is modified to Phosphoserine. Residues 158–168 (HLRKLRKRLLR) are LDL and other lipoprotein receptors binding. 162 to 165 (LRKR) is a binding site for heparin. The interval 210 to 290 (AATVGSLASQ…SWFEPLVEDM (81 aa)) is lipid-binding and lipoprotein association. O-linked (GalNAc...) threonine glycosylation occurs at Thr212. Residue 229 to 236 (GERLRARM) participates in heparin binding. Residues 266 to 317 (QQISLQAEAFQARLKSWFEPLVEDMQRQWAGLVEKVQAAVGASTAPVPSDNH) are homooligomerization. The specificity for association with VLDL stretch occupies residues 278–290 (RLKSWFEPLVEDM).

The protein belongs to the apolipoprotein A1/A4/E family. Homotetramer. May interact with ABCA1; functionally associated with ABCA1 in the biogenesis of HDLs. May interact with APP/A4 amyloid-beta peptide; the interaction is extremely stable in vitro but its physiological significance is unclear. May interact with MAPT. May interact with MAP2. In the cerebrospinal fluid, interacts with secreted SORL1. Interacts with PMEL; this allows the loading of PMEL luminal fragment on ILVs to induce fibril nucleation. APOE exists as multiple glycosylated and sialylated glycoforms within cells and in plasma. The extent of glycosylation and sialylation are tissue and context specific. In terms of processing, glycated in plasma VLDL. Post-translationally, phosphorylated by FAM20C in the extracellular medium.

It is found in the secreted. The protein localises to the extracellular space. Its subcellular location is the extracellular matrix. It localises to the extracellular vesicle. The protein resides in the endosome. It is found in the multivesicular body. Its function is as follows. APOE is an apolipoprotein, a protein associating with lipid particles, that mainly functions in lipoprotein-mediated lipid transport between organs via the plasma and interstitial fluids. APOE is a core component of plasma lipoproteins and is involved in their production, conversion and clearance. Apolipoproteins are amphipathic molecules that interact both with lipids of the lipoprotein particle core and the aqueous environment of the plasma. As such, APOE associates with chylomicrons, chylomicron remnants, very low density lipoproteins (VLDL) and intermediate density lipoproteins (IDL) but shows a preferential binding to high-density lipoproteins (HDL). It also binds a wide range of cellular receptors including the LDL receptor/LDLR, the LDL receptor-related proteins LRP1, LRP2 and LRP8 and the very low-density lipoprotein receptor/VLDLR that mediate the cellular uptake of the APOE-containing lipoprotein particles. Finally, APOE also has a heparin-binding activity and binds heparan-sulfate proteoglycans on the surface of cells, a property that supports the capture and the receptor-mediated uptake of APOE-containing lipoproteins by cells. A main function of APOE is to mediate lipoprotein clearance through the uptake of chylomicrons, VLDLs, and HDLs by hepatocytes. APOE is also involved in the biosynthesis by the liver of VLDLs as well as their uptake by peripheral tissues ensuring the delivery of triglycerides and energy storage in muscle, heart and adipose tissues. By participating in the lipoprotein-mediated distribution of lipids among tissues, APOE plays a critical role in plasma and tissues lipid homeostasis. APOE is also involved in two steps of reverse cholesterol transport, the HDLs-mediated transport of cholesterol from peripheral tissues to the liver, and thereby plays an important role in cholesterol homeostasis. First, it is functionally associated with ABCA1 in the biogenesis of HDLs in tissues. Second, it is enriched in circulating HDLs and mediates their uptake by hepatocytes. APOE also plays an important role in lipid transport in the central nervous system, regulating neuron survival and sprouting. The chain is Apolipoprotein E (APOE) from Macaca nemestrina (Pig-tailed macaque).